The following is a 112-amino-acid chain: ATP synthase epsilon chain (112 aa).

This sequence belongs to the ATPase epsilon chain family. F-type ATPases have 2 components, CF(1) - the catalytic core - and CF(0) - the membrane proton channel. CF(1) has five subunits: alpha(3), beta(3), gamma(1), delta(1), epsilon(1). CF(0) has three main subunits: a, b and c.

It localises to the cell inner membrane. Produces ATP from ADP in the presence of a proton gradient across the membrane. The protein is ATP synthase epsilon chain of Rickettsia felis (strain ATCC VR-1525 / URRWXCal2) (Rickettsia azadi).